Here is a 355-residue protein sequence, read N- to C-terminus: Histidinol-phosphate aminotransferase (355 aa).

Lys218 is subject to N6-(pyridoxal phosphate)lysine.

This sequence belongs to the class-II pyridoxal-phosphate-dependent aminotransferase family. Histidinol-phosphate aminotransferase subfamily. In terms of assembly, homodimer. Pyridoxal 5'-phosphate is required as a cofactor.

The enzyme catalyses L-histidinol phosphate + 2-oxoglutarate = 3-(imidazol-4-yl)-2-oxopropyl phosphate + L-glutamate. It functions in the pathway amino-acid biosynthesis; L-histidine biosynthesis; L-histidine from 5-phospho-alpha-D-ribose 1-diphosphate: step 7/9. In Chlorobium limicola (strain DSM 245 / NBRC 103803 / 6330), this protein is Histidinol-phosphate aminotransferase.